The chain runs to 247 residues: PF03932 family protein CutC (247 aa).

This sequence belongs to the CutC family.

The protein localises to the cytoplasm. The chain is PF03932 family protein CutC from Klebsiella pneumoniae subsp. pneumoniae (strain ATCC 700721 / MGH 78578).